A 294-amino-acid polypeptide reads, in one-letter code: Putative isocitrate dehydrogenase [NAD] subunit-like 4 (294 aa).

It belongs to the isocitrate and isopropylmalate dehydrogenases family.

Its function is as follows. Performs an essential role in the oxidative function of the citric acid cycle. The protein is Putative isocitrate dehydrogenase [NAD] subunit-like 4 (IDH4) of Arabidopsis thaliana (Mouse-ear cress).